The sequence spans 133 residues: Protein Wnt-4 (133 aa).

S1 carries O-palmitoleoyl serine; by PORCN lipidation. 2 cysteine pairs are disulfide-bonded: C69–C114 and C99–C109. The N-linked (GlcNAc...) asparagine glycan is linked to N100.

This sequence belongs to the Wnt family. In terms of processing, palmitoleoylation is required for efficient binding to frizzled receptors. Depalmitoleoylation leads to Wnt signaling pathway inhibition.

It is found in the secreted. The protein resides in the extracellular space. The protein localises to the extracellular matrix. Its function is as follows. Ligand for members of the frizzled family of seven transmembrane receptors. Plays an important role in embryonic development. The sequence is that of Protein Wnt-4 (WNT-4) from Strongylocentrotus purpuratus (Purple sea urchin).